Consider the following 103-residue polypeptide: Cell division protein FtsB (103 aa).

Over Met-1 to Lys-3 the chain is Cytoplasmic. The helical transmembrane segment at Leu-4 to Phe-21 threads the bilayer. The Periplasmic portion of the chain corresponds to Gly-22 to Arg-103. Residues Arg-31 to Ala-71 adopt a coiled-coil conformation.

The protein belongs to the FtsB family. Part of a complex composed of FtsB, FtsL and FtsQ.

The protein localises to the cell inner membrane. In terms of biological role, essential cell division protein. May link together the upstream cell division proteins, which are predominantly cytoplasmic, with the downstream cell division proteins, which are predominantly periplasmic. In Escherichia coli O81 (strain ED1a), this protein is Cell division protein FtsB.